The primary structure comprises 288 residues: Bis(5'-nucleosyl)-tetraphosphatase, symmetrical (288 aa).

This sequence belongs to the Ap4A hydrolase family.

The catalysed reaction is P(1),P(4)-bis(5'-adenosyl) tetraphosphate + H2O = 2 ADP + 2 H(+). Its function is as follows. Hydrolyzes diadenosine 5',5'''-P1,P4-tetraphosphate to yield ADP. This Pseudomonas putida (strain W619) protein is Bis(5'-nucleosyl)-tetraphosphatase, symmetrical.